A 546-amino-acid chain; its full sequence is Probable malate:quinone oxidoreductase (546 aa).

The protein belongs to the MQO family. It depends on FAD as a cofactor.

The enzyme catalyses (S)-malate + a quinone = a quinol + oxaloacetate. Its pathway is carbohydrate metabolism; tricarboxylic acid cycle; oxaloacetate from (S)-malate (quinone route): step 1/1. The chain is Probable malate:quinone oxidoreductase from Acinetobacter baumannii (strain ACICU).